The sequence spans 896 residues: MAAIGWPGIVAIISVAISFIIMAADWVGPDITFTILLSWLTAFDGKIITVAKAAAGYGNTGLLTVIFLYWVAEGVTQTGGLELVMNYVLGRSRSVHWALVRSMFPVMVLSAFLNNTPCVTFMIPILMSWARRCGVPPKKLLIPLSYAAVLGGTCTSIGTSTNLVIVGMQDTRYNKQNKEDEAKFGMFDIAPYGVPYALMGFVFIILTQRFLLPGNSSRYAKDLLIAVRVLPSSPVVKKKLKDSGLRTQTGFSLAGLWRGGAMTRQVDPDTVLEANDILYCAGELDVVEFVGEEFGLGLVTAETERALTDGQAVGDSEATAFHDTGASPYKKLVQVTMTKTADLVGRTVREVSWQGRFGLIPVAIQRGNGREDGRLNDVVLAAGDVLILDTTPHFDEARDDFKINFEKLRFVKDGAAKEFVIGVKVKKNSEVVNKTVTAAGLRGVPGLFVLSVDRADGSSVDASDYLYKIQPGDTLWLAADVGAVGFLSKFPGLELVQQEQVDKTGTSILYRHLVQAAVSHKGPLVGKTVRDVRFRTLYNAAIVAVHREGVRVPLKVQDIVLQGGDVLLISCHTKWAEEHRMDKAFVLVQAVPDSSPPKRGRMAIGVLLVVGMVLTQIVGGLKEKEYIHLWPAAVLTAALMLLTGCMNADQARKAIMWDVYLTIAAAFGVSAALENTGVAGKVANAIISIGKSIGGDGPALIAIYVATAVMSELLTNNAAGAIMYPIAAIAGDQLKIPAVDISVAIMLGASAGFINPFSYQTNLMVYAAGNYSVREFATIGAPFQIWLMVVASFILCYMKQWKQVWIATWSITAFIVFVPALLTLLPHTVQNRMEAFFDRIAEAINPRAALQRRRSARAQSFGGKAMSVGSTESRTDGSSTPDVALTFIEMPKMGVR.

5 consecutive transmembrane segments (helical) span residues 1–21 (MAAIGWPGIVAIISVAISFII), 47–69 (IITVAKAAAGYGNTGLLTVIFLY), 106–126 (VMVLSAFLNNTPCVTFMIPIL), 140–160 (LLIPLSYAAVLGGTCTSIGTS), and 186–206 (MFDIAPYGVPYALMGFVFIIL). 4 RCK C-terminal domains span residues 212-296 (LPGN…EFGL), 319-404 (TAFH…FKIN), 408-493 (LRFV…FPGL), and 499-586 (EQVD…KAFV). The next 7 membrane-spanning stretches (helical) occupy residues 602 to 622 (MAIGVLLVVGMVLTQIVGGLK), 626 to 646 (YIHLWPAAVLTAALMLLTGCM), 654 to 674 (AIMWDVYLTIAAAFGVSAALE), 685 to 705 (AIISIGKSIGGDGPALIAIYV), 734 to 754 (LKIPAVDISVAIMLGASAGFI), 776 to 796 (FATIGAPFQIWLMVVASFILC), and 804 to 824 (VWIATWSITAFIVFVPALLTL). The disordered stretch occupies residues 857–881 (RAQSFGGKAMSVGSTESRTDGSSTP). The segment covering 868–881 (VGSTESRTDGSSTP) has biased composition (polar residues).

The protein belongs to the divalent anion:Na+ symporter (DASS) superfamily. Na+/sulfate symporter (TC 2.A.47.4) family.

It localises to the cell membrane. Na(+)/sulfate cotransporter with a probable low-affinity for sulfate. This chain is Probable sodium/sulfate cotransporter 3 (SLT3), found in Chlamydomonas reinhardtii (Chlamydomonas smithii).